The sequence spans 369 residues: 4beta-methylsterol monooxygenase (369 aa).

Residues 29-135 (WYVVEIDGRL…VKAQWGLIWL (107 aa)) form the Rieske domain. [2Fe-2S] cluster-binding residues include Cys-70, His-72, Cys-89, and His-92.

[2Fe-2S] cluster is required as a cofactor.

The catalysed reaction is a 3beta-hydroxy-4,4-dimethylsteroid + 3 NADH + 3 O2 + 2 H(+) = a 3beta-hydroxy-4alpha-methylsteroid-4beta-carboxylate + 3 NAD(+) + 4 H2O. It catalyses the reaction 4,4-dimethyl-5alpha-cholesta-8,24-dien-3beta-ol + 3 NADH + 3 O2 + 2 H(+) = 4beta-carboxy-4alpha-methyl-5alpha-cholesta-8,24-dien-3beta-ol + 3 NAD(+) + 4 H2O. The enzyme catalyses a 3beta-hydroxy-4,4-dimethylsteroid + NADH + O2 + H(+) = a 3beta-hydroxy-4beta-hydroxymethyl-4alpha-methylsteroid + NAD(+) + H2O. It carries out the reaction a 3beta-hydroxy-4beta-hydroxymethyl-4alpha-methylsteroid + NADH + O2 + H(+) = a 3beta-hydroxy-4beta-formyl-4alpha-methylsteroid + NAD(+) + 2 H2O. The catalysed reaction is a 3beta-hydroxy-4beta-formyl-4alpha-methylsteroid + NADH + O2 = a 3beta-hydroxy-4alpha-methylsteroid-4beta-carboxylate + NAD(+) + H2O. It catalyses the reaction 4,4-dimethyl-5alpha-cholesta-8,24-dien-3beta-ol + NADH + O2 + H(+) = 4beta-hydroxymethyl-4alpha-methylzymosterol + NAD(+) + H2O. The enzyme catalyses 4beta-hydroxymethyl-4alpha-methylzymosterol + NADH + O2 + H(+) = 4beta-formylmethyl-4alpha-methyl-5alpha-cholesta-8,24-dien-3beta-ol + NAD(+) + 2 H2O. It carries out the reaction 4beta-formylmethyl-4alpha-methyl-5alpha-cholesta-8,24-dien-3beta-ol + NADH + O2 = 4beta-carboxy-4alpha-methyl-5alpha-cholesta-8,24-dien-3beta-ol + NAD(+) + H2O. It functions in the pathway steroid biosynthesis; sterol biosynthesis. Its function is as follows. Participates in the biosynthesis of bacterial sterols. Together with SdmB, removes one methyl group from the C-4 position of 4,4-dimethylated steroid molecules. SdmA oxidizes the sterol 4beta-methyl group into first a hydroxyl, then an aldehyde and finally a carboxylic acid group. In Methylococcus capsulatus (strain ATCC 33009 / NCIMB 11132 / Bath), this protein is 4beta-methylsterol monooxygenase.